Reading from the N-terminus, the 161-residue chain is MRIGYGFDLHAFGSTKPLIIGGVLIPCEKGLIAHSNGDLLIHSLIDALLGATAMGDIGSFFPSNNYIYKNIDSRILLKKIWNKIILLNYDICNIDITIIAEYPKMLPYIFFMRSNLSLDLNTEIDNISIKSTTSKKIGCIGRKEAIACHSIVMLIKNKKCI.

2 residues coordinate a divalent metal cation: Asp8 and His10. 4-CDP-2-C-methyl-D-erythritol 2-phosphate contacts are provided by residues 8–10 (DLH) and 34–35 (HS). A divalent metal cation is bound at residue His42. Residues 56–58 (DIG), 100–106 (AEYPKML), and Arg142 each bind 4-CDP-2-C-methyl-D-erythritol 2-phosphate.

This sequence belongs to the IspF family. Homotrimer. A divalent metal cation serves as cofactor.

The enzyme catalyses 4-CDP-2-C-methyl-D-erythritol 2-phosphate = 2-C-methyl-D-erythritol 2,4-cyclic diphosphate + CMP. It functions in the pathway isoprenoid biosynthesis; isopentenyl diphosphate biosynthesis via DXP pathway; isopentenyl diphosphate from 1-deoxy-D-xylulose 5-phosphate: step 4/6. Its function is as follows. Involved in the biosynthesis of isopentenyl diphosphate (IPP) and dimethylallyl diphosphate (DMAPP), two major building blocks of isoprenoid compounds. Catalyzes the conversion of 4-diphosphocytidyl-2-C-methyl-D-erythritol 2-phosphate (CDP-ME2P) to 2-C-methyl-D-erythritol 2,4-cyclodiphosphate (ME-CPP) with a corresponding release of cytidine 5-monophosphate (CMP). The protein is 2-C-methyl-D-erythritol 2,4-cyclodiphosphate synthase of Buchnera aphidicola subsp. Acyrthosiphon pisum (strain 5A).